The sequence spans 171 residues: 3-hydroxydecanoyl-[acyl-carrier-protein] dehydratase (171 aa).

His70 is a catalytic residue.

It belongs to the thioester dehydratase family. FabA subfamily. In terms of assembly, homodimer.

Its subcellular location is the cytoplasm. The catalysed reaction is a (3R)-hydroxyacyl-[ACP] = a (2E)-enoyl-[ACP] + H2O. It carries out the reaction (3R)-hydroxydecanoyl-[ACP] = (2E)-decenoyl-[ACP] + H2O. It catalyses the reaction (2E)-decenoyl-[ACP] = (3Z)-decenoyl-[ACP]. It functions in the pathway lipid metabolism; fatty acid biosynthesis. Necessary for the introduction of cis unsaturation into fatty acids. Catalyzes the dehydration of (3R)-3-hydroxydecanoyl-ACP to E-(2)-decenoyl-ACP and then its isomerization to Z-(3)-decenoyl-ACP. Can catalyze the dehydratase reaction for beta-hydroxyacyl-ACPs with saturated chain lengths up to 16:0, being most active on intermediate chain length. The protein is 3-hydroxydecanoyl-[acyl-carrier-protein] dehydratase of Stenotrophomonas maltophilia (strain R551-3).